Consider the following 201-residue polypeptide: Transgelin (201 aa).

Alanine 2 carries the post-translational modification N-acetylalanine. The 114-residue stretch at 24-137 (EELEERLVEW…RTLMALGSLA (114 aa)) folds into the Calponin-homology (CH) domain. The residue at position 166 (serine 166) is a Phosphoserine. Lysine 172 is modified (N6-acetyllysine). The Calponin-like repeat unit spans residues 175 to 200 (IGLQMGSNRGASQAGMTGYGRPRQII). Residue serine 181 is modified to Phosphoserine. Arginine 183 bears the Omega-N-methylarginine mark.

Belongs to the calponin family.

It localises to the cytoplasm. In terms of biological role, actin cross-linking/gelling protein. In Mus musculus (Mouse), this protein is Transgelin (Tagln).